The primary structure comprises 5218 residues: MTMPHHSSGPAKDSPLCRFPPFPGGNPVFTNIRREKVNFQLPPPDHALLAAAWAVLLRLYTGHVKTCFESATSDQEANLVTYEARDSDTLQTIVLRGACVSSTAEEKAGLRDLNTAVVRTTVSIDSWTDEMLQDKIAALLQPGKEIVLFQTPSGCVLVYMQSFMSAMEVKNVSSTLTYIMSSDPDKTAIRNLSISPRDLAQIMRWNDRKLKSERTNLVYDLFSARAHEQDANMAIDAWDGRMSYTELERVSSTWARQLQKQGISQGSWVLFCFEKSRLAVVSMIAILKAGGVCVPIDPRYPVERIRDIIRTTNATIALVGAGKTAALFKSADTAVQTIDITKDIPHGLSDTVVQSNTKIDDPAFGLFTSGSTGVPKCIVVTHSQICTAVQAYKDRFGVTSETRVLQFSSYTFDISIADTFTALFYGGTLCIPSEEDRMSNLQDYMVSVRPNWAVLTPTVSRFLDPGVVKDFISTLIFTGEASREADTVPWIEAGVNLYNVYGPAENTLITTATRIRKGKSSNIGYGVNTRTWVTDVSGACLVPVGSIGELLIESGHLADKYLNRPDRTEAAFLSDLPWIPNYEGDSVRRGRRFYRTGDLVRYCDDGSLICVGRSDTQIKLAGQRVELGDVEAHLQSDPTTSQAAVVFPRSGPLEARLIALLVTGNKDGTPHNQQSLPKPAFAQCPPDLVKYATSSLQQRLPSYMVPSVWLGIDFLPMSVSGKLDRAVLQDQLESLSPSDYAEILGTTGLEVDPGGAASSVASDSDLRDMNDDSLLLTACSRVLNLPAGKISYSQSFIHAGGDSITAMQVSSWMKRFTGKRIGVKDLLVSPSISTAASCIKSAQDGSRNFVAVRPGQRIPVSPIQKLFFQTAEASKSWNHYHQSFLFRIDQPIKPQTIEDAISLVMQRHPMLQARFERTEEGDWYQYIPIDVERRASVEVIGSLSTDDREAAMLRARQSIDLTEGPLIRCQLFNNNVDEASRLFFVVIHHAVVDLVSWRIIMEELEAHLATDSTPDRGEAYQESVPFLAWCQVQAEAVKDIPVDRTVPLIPKIPTADFGYWGLKHDENVYGNTVERKIPLGHSITEDLLYKCHDSLHTKTIDVLLAAVLVSFRRSFLDRPVPAVFNEGHGREPGGEDAVDLSRTVGWFTTISPVYVPEVSPGDILDVVRRVKDYRWATPNNGFDYFSTKYLTQSGIKLFEDHLPAEILFNYEGRYQAMESEQTVLKPESWHAGEASKDQDPGLRRFCLFEISTAVLPDGQLHLTCSWNKNMRHQGRIRLWLDTLLPAAIGEIVSSLALASPQLTLSDVELLRLYDYSSLDILKKSILSIPAVQTLDDLEGVYPGSPMQDALFLSQSKSQDGAYEVDFTWRVATSLQNSQPAVDIGCLVEAWKDTVALHAALRTVILESSLPATGILHQVVLRSHDPDIVILDVRDVTAAITILDSYPPPTEEGIALIKRPPHRLLICTTIEGSVLIKFQVNHLVFDGMSTDKIIQDLSKAYTCRHSNKLPDHSESKLHDGTYGNRPTKPPLAEFIRYIRDPQRKQDSINYWKNALRGATTCSFPPLFDQITSEKAMPRQSWASVPIPLCVDSKELSKTLANLGITMSTMFQTVWAIVLRIYSQNGQSVFGYLTSGRDAPVDGIDSAVGNFIAMLVCFFDFDDDGVHTVADMARKIHNASANSISHQACSLAEIQDALGLSTSTPLFNTAFTYLPKRPTNVKAGEPEHHLCFEELSMSDPTEFDLTLFVEPTQESNEVSAHLDFKLSYISQAYATSIASTVAHILSELVHDPYRALNTLPIVSEHDTAIIRSWNDHLFPPATECIHETFSRKVVEHPQREAICSWDGSLTYAELSDLSQRLSIHLVSLGIKVGTKIPICFEKSMWTIVTILAVVQAGGVFVLLEPGHPESRLSGIIKQVQAELLLCSPATSRMGALQNISTQMGTEFKIVELEPEFIRSLPLPPKPNHQPMVGLNDDLYVVFTSGSTGVPKGAVATHQAYATGIYEHAVACGMTSLGAPPRSLQFASYSFDASIGDIFTTLAVGGCLCIPREEDRNPAGITTFINRYGVTWAGITPSLALHLDPDAVPTLKALCVAGEPLSMSVVTVWSKRLNLINMYGPTEATVACIANQVTCTTTTVSDIGRGYRATTWVVQPDNHNSLVPIGAVGELIIEGSILCRGYLNDPERTAEVFIRSPSWLHDLRPNSTLYKTGDLVRYSADGKIIFIGRKDTQVKMNGQRFELGEVEHALQLQLDPSDGPIIVDLLKRTQSGEPDLLIAFLFVGRANTGTGNSDEIFIATSTSSLSEFSTVIKKLQDAQRAMEVLPLFMVPQAYIPIEGGIPLTAAGKIDRRMLRKLCEPFNRNDLISFTSKALSTSVKDAETTDTVEDRLARIWEKVLGVKGVGRESDFFSSGGNSMAAIALRAEAQRSGFTLFVADIFTNPRLADMAKLFSHGQSVSPSSSTLRTKVPISSLQKRSSGLQTAAPVSNGSPVRRCQKENIIDCPVAFEYEEGPSDTQLKEASRICGISSRSIEDVFPCTPMQEALVALSLIPGAQASYALHAAFELRPGLDRNRFRSAWESTVKAQPILRSRIISGSNGSSVVVTSATDSIPQLDVSGLDTFLEQQLQVGFAPGAPLFRLAFVYSKADDCDYFVISAHHAIYDGWSLNLIWSQVLALYTNGELPPPGPSFKHFARNLNLVQSKLDSEDFWRKLLVKPDQESFRFPDVPVGHKPATRCTTNFHFPFSMQSKIGTTANTCINAAWAITLAQYSSNKTVNFGVTLWGRDFPMIDIEHMTGPTIVTVPRQVNVIPESSVAEFLQDLQKSLAVVLPHQHLGLHRIQALGPIARQACDFSTLLVVNHGSSISWSELEAADIVPVPLRSSDLYAYPMVVEVENASSDTLDIRVHSDPDCIEVQLLERLMEQFGHNLQTLCRAASFDPGKRIAELMDDTATTHLRTLFSWNSRVKDSPDVAAIAVHKLLEETAQSQPAESAIVAHDGQLSYMQMDRCADVLARQIRKTNMISAQSPFVCIHLLRSATAVVSMLAVLKAGGAFMPVDISQPRSRLQNLIEESGAKLVLTLPESANALATLSGLTKVIPVSLSELVQQITDNTTKKDEYCKSGDTDPSSPAYLLYTSGTSGKPKGVVMEHRAWSLGFTCHAEYMGFNSCTRILQFSSLMFDLSILEIWAVLYAGGCLFIPSDKERVNNLQDFTRINDINTVFLTPSIGKLLNPKDLPNISFAGFIGEPMTRSLIDAWTLPGRRLVNSYGPTEACVLVTAREISPTAPHDKPSSNIGHALGANIWVVEPQRTALVPIGAVGELCIEAPSLARCYLANPERTEYSFPSTVLDNWQTKKGTRVYRTGDLVRYASDGTLDFLGRKDGQIKLRGQRIELGEIEHHIRRLMSDDPRFHEASVQLYNPATDPDRDATVDVQMREPYLAGLLVLDLVFTDEVMGIPCTSLTSANTSENLQTLVTELKKSLRGVLPHYMVPLHFVAVSRLPTGSSGKLDHAFVRACLRELTAPLDGNFPKVEQVLTTNESVLRQWWGTVLAMDPHSIQRGDDFFSLGGSSISAMRLVGLARSSGHKLQHEDIFMCPRLADMAGQISFVQEASVSPTTSPTIKFDLLDDCEVDEVIDHILPQLDMNKELIEDVYPCTPLQESLMAATARHGEAYTMIQSITVLASQLAQLKKAMDVVFRDFEVLRTRIALGPSQQALQVVVKHEELSWESFPSIQSFKDHFYRSLGYGKPLARLAVITQALDTKQPISHGTREARTKNSQDTVMVVVGAHHSIYDAHVLSMIWRRLYREFIGSQADGILEAETSRSEGVVPFKSYVEKLLRGKDNDESLLFWKEKLRGVSSSQFPPASWPRVLEHQPSATQTLITKVSLPTSSRKKLGATVATVAYAAWALTIAHYTADPDVVFGATLSGRETMAGSISHPESIAGPTIITVPLRIIIDFQTVVSDFLSTLQKDIVRAAYFGQMMGLNSIAHIDNDCRDACGFKSIIVVQVPDEGENHDGRAANPFQMSLESIGHFPAPLVVEVEQSESTDVLIRMAYDPVLVPEKLAHFISDTFTTTMSNLSAANPKAKVESIPALSEAHLAELDVTCPEWILGKAKDEKIRTESHQCLQDLVCRRAQQSPNSQAIDSWDGSISYHELDGLSSILAEHLSQLGVRPEAPVCLLFEKSKWAVVAMIGIIKAGGCFVPLDPSYPHERLEHIISETGSSVIVTSAAYSKLCLSLSVRGIVCDGSVFSSTKKPLPSTADSPPSFSVRPNQAAYILFTSGSTGKPKGVVMEHHSVCSALIALGKRMGLGPQSRVLQFNSYWFDVMLLDIFGTLVYGGCLCIPKEEQRMSNLSGWVQKFKVNTMLLSTSVSRLMQPADTPSLETLCLTGEAVLQSDVDRWAPKLHLIAGYGPTETCIMSVSGELTPSSPANLIGKPVSCQAWVINPLKETELAPYGATGELYIQGPTVARGYLHDDVLTSKAFIVDPQWLTGYKTNENQWSRRAYKTGDLVFWGPQSNLYYVRRKDSSQVKIRGQRVELAEIEEVIRQHIPPDVTVCVDLLSSDDQNTRIILGAVLGIGDRALGGPEDLEVIGYMDDLKSHIIPALEASLPHHMIPEAYVPFVQLPTLGSGKLDRKTVRRVAGPLAFSLPQASARHPNQPTVTHTQKLLRQLWCKILPQLDESAVNKQDNFLGIGGDSIAAIKLVALLRQHGISLAVAEIFTRPTLEAMSSLIDEHNFVVSHAGILSDVTRNTSGVMRQTTNLIAGRHSMAVEKSRECDNSTLPCTEYQQMFLAGTEAFTGAHSAQFIFRLPEKIDLDRLQAAFDHCADWYPNLRTQIHKDADTGRLLHDISPIGVKVPWSCHYSDDLNTVLSHDKKFPPGLDGPLHRVTIMRHRDPTESMLVWTLNHAAYDAWSLRMMLEHITEAYANPDYEPSYSLGWTAFVLHTENTKEASRSFWSSYLSDVKPARLMFNYNLVSNPRQDRLYEARINIPKRVLSQATAATVLLAGLTLLVARVCDTRDVILAHLLTGRTLPLAGIENCPGPTITKVPLRIPLMDQDLVTLELDSVAKKITAELMRVMPHEHSGLSAIREFIPQAEGTTTSSGKFHAGSVLGRLPLDLVIHPKGGLDLLGKHGLGLQNEGFRLVAPPSGGLSMECALVDDDDDKRSDTISVDVSVLWDQRAATQEDVIELVHSLQGIFTKRNLAASICLMYK.

Positions 223 to 620 (SARAHEQDAN…VGRSDTQIKL (398 aa)) are adenylation 1. A Carrier 1 domain is found at 769 to 843 (MNDDSLLLTA…TAASCIKSAQ (75 aa)). The residue at position 803 (S803) is an O-(pantetheine 4'-phosphoryl)serine. A condensation 1 region spans residues 858 to 1154 (IPVSPIQKLF…GWFTTISPVY (297 aa)). The epimerization stretch occupies residues 1338-1806 (EGVYPGSPMQ…LPIVSEHDTA (469 aa)). The interval 1828 to 2233 (SRKVVEHPQR…IGRKDTQVKM (406 aa)) is adenylation 2. The Carrier 2 domain maps to 2379–2453 (ETTDTVEDRL…DMAKLFSHGQ (75 aa)). S2414 bears the O-(pantetheine 4'-phosphoryl)serine mark. The condensation 2 stretch occupies residues 2531–2929 (EDVFPCTPMQ…MEQFGHNLQT (399 aa)). An adenylation 3 region spans residues 2979 to 3386 (LEETAQSQPA…GRKDGQIKLR (408 aa)). The region spanning 3532–3608 (QVLTTNESVL…DMAGQISFVQ (77 aa)) is the Carrier 3 domain. O-(pantetheine 4'-phosphoryl)serine is present on S3569. Positions 3649–4102 (EDVYPCTPLQ…PALSEAHLAE (454 aa)) are condensation 3. An adenylation 4 region spans residues 4134-4530 (RRAQQSPNSQ…NLYYVRRKDS (397 aa)). The Carrier 4 domain maps to 4666-4740 (THTQKLLRQL…AMSSLIDEHN (75 aa)). An O-(pantetheine 4'-phosphoryl)serine modification is found at S4701. Residues 4785–5101 (TLPCTEYQQM…SAIREFIPQA (317 aa)) are condensation 4.

It belongs to the NRP synthetase family. The cofactor is pantetheine 4'-phosphate.

It functions in the pathway mycotoxin biosynthesis; HC-toxin biosynthesis. In terms of biological role, non-ribosomal peptide synthetase, part of the diffuse TOX2 gene cluster that mediates the biosynthesis of the HC-toxin, cyclic tetrapeptide of structure cyclo(D-Pro-L-Ala-D-Ala-L-Aeo), where Aeo stands for 2-amino-9,10-epoxi-8-oxodecanoic acid. HC-toxin is a determinant of specificity and virulence in the interaction between the producing fungus and its host, maize. HTS1, contains four modules, one for each amino acid in HC-toxin, with the order of activation being most likely Pro, Ala, Ala, and Aeo. In addition, HTS1 has one epimerase domain between modules 1 and 2, which is responsible for epimerizing L-Pro to D-Pro. The absence of an epimerizing domain after module 3, for producing D-Ala, can be explained by the presence in the cluster of TOXG, an Ala racemase, which produces D-Ala for incorporation by HTS1 into HC-toxin. In Cochliobolus carbonum (Maize leaf spot fungus), this protein is HC-toxin synthetase.